The following is a 453-amino-acid chain: TATA box-binding protein-associated factor RNA polymerase I subunit A (453 aa).

As to quaternary structure, component of the transcription factor SL1/TIF-IB complex, composed of TBP and at least TAF1A, TAF1B, TAF1C and TAF1D. In the complex interacts directly with TBP, TAF1A and TAF1B. Interaction of the SL1/TIF-IB subunits with TBP excludes interaction of TBP with the transcription factor IID (TFIID) subunits. Interacts with UBFT. Interacts with CEBPA (isoform 1 and isoform 4). Part of Pol I pre-initiation complex (PIC), in which Pol I core assembles with RRN3 and promoter-bound UTBF and SL1/TIF-IB complex.

The protein localises to the nucleus. Its subcellular location is the nucleolus. Its function is as follows. Component of the transcription factor SL1/TIF-IB complex, which is involved in the assembly of the PIC (pre-initiation complex) during RNA polymerase I-dependent transcription. The rate of PIC formation probably is primarily dependent on the rate of association of SL1/TIF-IB with the rDNA promoter. SL1/TIF-IB is involved in stabilization of nucleolar transcription factor 1/UBTF on rDNA. Formation of SL1/TIF-IB excludes the association of TBP with TFIID subunits. The protein is TATA box-binding protein-associated factor RNA polymerase I subunit A (Taf1a) of Mus musculus (Mouse).